A 139-amino-acid chain; its full sequence is GSK3B-interacting protein (139 aa).

Residues 41-45 (VNDVL) are required for PRKAR2A interaction; contributes to a protective effect against H(2)O(2)-induced apoptosis. The interval 115-139 (SPAYREAFGNALLQRLEALKRDGQS) is interaction with GSK3B and acts as a GSK3B inhibitor.

It belongs to the GSKIP family. As to quaternary structure, forms a complex composed of PRKAR2A or PRKAR2B, GSK3B and GSKIP through GSKIP interaction; facilitates PKA-induced phosphorylation of GSK3B leading to GSK3B inactivation; recruits DNM1L through GSK3B for PKA-mediated phosphorylation of DNM1L; promotes beta-catenin degradation through GSK3B-induced phosphorylation of beta-catenin; stabilizes beta-catenin and enhances Wnt-induced signaling through PKA-induced phosphorylation of beta-catenin. Interacts with GSK3B; induces GSK3B-mediated phosphorylation of GSKIP and inhibits GSK3B kinase activity. In terms of processing, phosphorylated by GSK3B.

It is found in the cytoplasm. Its subcellular location is the nucleus. A-kinase anchoring protein for GSK3B and PKA that regulates or facilitates their kinase activity towards their targets. The ternary complex enhances Wnt-induced signaling by facilitating the GSK3B- and PKA-induced phosphorylation of beta-catenin leading to beta-catenin degradation and stabilization respectively. Upon cAMP activation, the ternary complex contributes to neuroprotection against oxidative stress-induced apoptosis by facilitating the PKA-induced phosphorylation of DML1 and PKA-induced inactivation of GSK3B. During neurite outgrowth promotes neuron proliferation; while increases beta-catenin-induced transcriptional activity through GSK3B kinase activity inhibition, reduces N-cadherin level to promote cell cycle progression. May play a role in cleft palate formation and is required for postnatal life through modulation of the activity of GSK3B during development. The chain is GSK3B-interacting protein from Mus musculus (Mouse).